The following is a 395-amino-acid chain: uncharacterized protein (395 aa).

Residues 247 to 270 (GGTVVPPNPDQPNPTPPDSSSPNY) form a disordered region. Residues 252 to 265 (PPNPDQPNPTPPDS) show a composition bias toward pro residues.

This is an uncharacterized protein from Vibrio cholerae serotype O1 (strain ATCC 39315 / El Tor Inaba N16961).